The primary structure comprises 258 residues: PHD finger protein ALFIN-LIKE 5 (258 aa).

Residues 143-205 (AKKQTKEKAP…EEEERDNTLC (63 aa)) form a disordered region. A compositionally biased stretch (polar residues) spans 152 to 165 (PNSTNKPNKPSSKM). Residues 184 to 200 (DDDESGDEYADEEEEER) show a composition bias toward acidic residues. The PHD-type zinc finger occupies 202–254 (NTLCGSCGTNDGKDEFWICCDSCERWYHGKCVKITPARAEHIKHYKCPDCGNK).

This sequence belongs to the Alfin family.

The protein resides in the nucleus. In terms of biological role, histone-binding component that specifically recognizes H3 tails trimethylated on 'Lys-4' (H3K4me3), which mark transcription start sites of virtually all active genes. This Oryza sativa subsp. indica (Rice) protein is PHD finger protein ALFIN-LIKE 5.